The primary structure comprises 306 residues: D-alanine--D-alanine ligase (306 aa).

Residues E18 and S150 contribute to the active site. Positions K104 to E303 constitute an ATP-grasp domain. V134–T189 serves as a coordination point for ATP. Mg(2+) is bound by residues D257, E270, and N272. Residue S281 is part of the active site.

Belongs to the D-alanine--D-alanine ligase family. Requires Mg(2+) as cofactor. The cofactor is Mn(2+).

The protein localises to the cytoplasm. It carries out the reaction 2 D-alanine + ATP = D-alanyl-D-alanine + ADP + phosphate + H(+). Its pathway is cell wall biogenesis; peptidoglycan biosynthesis. Its function is as follows. Cell wall formation. This Haemophilus influenzae (strain ATCC 51907 / DSM 11121 / KW20 / Rd) protein is D-alanine--D-alanine ligase.